The following is a 251-amino-acid chain: uncharacterized protein (251 aa).

The protein to Anabaena PCC 7120 alr2406.

This is an uncharacterized protein from Synechocystis sp. (strain ATCC 27184 / PCC 6803 / Kazusa).